Here is a 408-residue protein sequence, read N- to C-terminus: Substance-P receptor (408 aa).

Over 1-32 the chain is Extracellular; it reads MNSNISAQNDSALNSTIQNGTKINQFIQPPWQ. Asn-4, Asn-9, Asn-14, and Asn-19 each carry an N-linked (GlcNAc...) asparagine glycan. Residues 33–55 form a helical membrane-spanning segment; the sequence is IALWSVAYSIIVIVSLVGNIIVM. Residues 56 to 65 lie on the Cytoplasmic side of the membrane; that stretch reads WIIIAHKRMR. Residues 66 to 87 form a helical membrane-spanning segment; the sequence is TVTNYFLVNLAFAEASMSAFNT. At 88 to 107 the chain is on the extracellular side; sequence VINFTYAIHNHWYYGLIYCK. An intrachain disulfide couples Cys-106 to Cys-181. Residues 108 to 129 traverse the membrane as a helical segment; it reads FHNFFPISAVFTSIYSMTAIAL. Residues 130–149 lie on the Cytoplasmic side of the membrane; it reads DRYMAIIHPLKPRLSATATK. A helical membrane pass occupies residues 150 to 170; it reads IVICVIWSFSFCMAFPLGYYA. The Extracellular segment spans residues 171–196; it reads DVYPMEGGDICYLNWPDSEENRKYEQ. The chain crosses the membrane as a helical span at residues 197-221; sequence VYQVLVFCLIYILPLLVIGCAYTFI. Residues 222–250 are Cytoplasmic-facing; that stretch reads GMTLWASEIPGDSSDRYHEQVVAKRKVVK. Residues 251–272 form a helical membrane-spanning segment; the sequence is MMIVVVCTFAICWLPFHIFFLL. The Extracellular portion of the chain corresponds to 273-283; the sequence is QTLHEMTQKFY. The helical transmembrane segment at 284–308 threads the bilayer; the sequence is QQFYLAIMWLAMSSTMYNPIIYCCL. Topologically, residues 309 to 408 are cytoplasmic; that stretch reads NDRFRIGFKH…SSSFYSNNLA (100 aa). Residue Cys-323 is the site of S-palmitoyl cysteine attachment. Positions 366 to 408 are disordered; it reads DEEAEENGKSSKRLSLDLTSNGSSRSVCKTMSDSSSFYSNNLA. Residues 382–408 are compositionally biased toward polar residues; it reads DLTSNGSSRSVCKTMSDSSSFYSNNLA.

It belongs to the G-protein coupled receptor 1 family.

The protein resides in the cell membrane. This is a receptor for the tachykinin neuropeptide substance P. It is probably associated with G proteins that activate a phosphatidylinositol-calcium second messenger system. This chain is Substance-P receptor (TACR1), found in Aquarana catesbeiana (American bullfrog).